Reading from the N-terminus, the 321-residue chain is Glucokinase (321 aa).

8–13 contributes to the ATP binding site; the sequence is GDVGGT.

Belongs to the bacterial glucokinase family.

It is found in the cytoplasm. It catalyses the reaction D-glucose + ATP = D-glucose 6-phosphate + ADP + H(+). The chain is Glucokinase from Escherichia fergusonii (strain ATCC 35469 / DSM 13698 / CCUG 18766 / IAM 14443 / JCM 21226 / LMG 7866 / NBRC 102419 / NCTC 12128 / CDC 0568-73).